The primary structure comprises 193 residues: BH3-interacting domain death agonist (193 aa).

Positions 87 to 101 (IAAQLAEIGDQLDKQ) match the BH3 motif.

In terms of assembly, forms heterodimers either with the pro-apoptotic protein BAX or the anti-apoptotic protein Bcl-2.

It is found in the cytoplasm. Its subcellular location is the mitochondrion outer membrane. Functionally, induces caspases and apoptosis. Counters the protective effect of Bcl-2. The protein is BH3-interacting domain death agonist (BID) of Gallus gallus (Chicken).